The primary structure comprises 201 residues: Recombination protein RecR (201 aa).

The segment at 57–72 (CADCRTFTEQDICTIC) adopts a C4-type zinc-finger fold. Residues 81-176 (GQICVVESPA…VASRIAHGVP (96 aa)) enclose the Toprim domain.

Belongs to the RecR family.

May play a role in DNA repair. It seems to be involved in an RecBC-independent recombinational process of DNA repair. It may act with RecF and RecO. This chain is Recombination protein RecR, found in Serratia proteamaculans (strain 568).